A 283-amino-acid chain; its full sequence is Bifunctional protein FolD (283 aa).

NADP(+) contacts are provided by residues 165–167 (GRS) and serine 190.

This sequence belongs to the tetrahydrofolate dehydrogenase/cyclohydrolase family. In terms of assembly, homodimer.

The catalysed reaction is (6R)-5,10-methylene-5,6,7,8-tetrahydrofolate + NADP(+) = (6R)-5,10-methenyltetrahydrofolate + NADPH. It carries out the reaction (6R)-5,10-methenyltetrahydrofolate + H2O = (6R)-10-formyltetrahydrofolate + H(+). It participates in one-carbon metabolism; tetrahydrofolate interconversion. Its function is as follows. Catalyzes the oxidation of 5,10-methylenetetrahydrofolate to 5,10-methenyltetrahydrofolate and then the hydrolysis of 5,10-methenyltetrahydrofolate to 10-formyltetrahydrofolate. This is Bifunctional protein FolD from Variovorax paradoxus (strain S110).